Reading from the N-terminus, the 954-residue chain is MSRAPDTHSDFIPRHIGPSDEDQATMLVAIGAASLDALIDEVVPPRIRSRAPLALPAARSETDVLQDLKRIAARNQIYRNYIGQGYYGTHTPNVVLRNVLENPAWYTAYTPYQPEISQGRLEALLNYQTMVADLTGLDISNASLLDEGTAAAEAMTLARRGSRSSSPVFFVSQHCHPQTLEVVRTRAEGLGIELVIGDESRGLPECFGVLLQYPHSLGGVADYRELAQAAHAQGAVVACVTDLLALALIEPPGQWGADIAVGSAQRFGVPFGFGGPHAGFMACRDAYKRNMPGRLVGVSKDAQGNPALRLALQTREQHIRREKATSNICTAQVLLAVMAGLYAVWHGPRGVRRIAERVQSLTGALRAALAGLGVKVANDTWFDTLSLETGAATPAILAAADCARINLRQVDGARLAVSLDETVTLADLQALVNVFAAGLGKDEVALAPPQASLDGIPAAVRRQGPILSHPVFSSVQSETDMLRYLRKLADKDLALDRTMIPLGSCTMKLNATAEMIPITWPEFALIHPFAPASQTPGYRELIEGLSAQLCEITGYDGISLQPNSGAQGEYAGLLAIRAYHQANGQPQRNVCLIPASAHGTNPASAQLAGMDVVVVASDANGNVDLADLRARIAQVGERLAALMITYPSTHGVFEEAVTEICDAVHEAGGQVYLDGANMNAMVGVAQPGKFGSDVSHLNLHKTFCIPHGGGGPGVGPVAVRAHLAPYLPGVLDARGRLDPEAKVGPVSAAPYGSAGILPIPYVYIALMGAEGLRRATEVAILNANYIATRLRGHYPVLYAGRNGRVAHECILDVRPLKETSGISAEDIAKRLMDYGFHAPTMSFPVAGTLMVEPTESEGLAELERFIEAMIAIRAEIAQVESGERDRDDNVLRNAPHTAQMLLAEEWHHDYPRQQAAYPVASLRENKYWPPVARVDNAYGDRNLVCACLPVEAYA.

Position 701 is an N6-(pyridoxal phosphate)lysine (Lys701).

It belongs to the GcvP family. As to quaternary structure, the glycine cleavage system is composed of four proteins: P, T, L and H. Pyridoxal 5'-phosphate serves as cofactor.

The enzyme catalyses N(6)-[(R)-lipoyl]-L-lysyl-[glycine-cleavage complex H protein] + glycine + H(+) = N(6)-[(R)-S(8)-aminomethyldihydrolipoyl]-L-lysyl-[glycine-cleavage complex H protein] + CO2. Its function is as follows. The glycine cleavage system catalyzes the degradation of glycine. The P protein binds the alpha-amino group of glycine through its pyridoxal phosphate cofactor; CO(2) is released and the remaining methylamine moiety is then transferred to the lipoamide cofactor of the H protein. This Bordetella pertussis (strain Tohama I / ATCC BAA-589 / NCTC 13251) protein is Glycine dehydrogenase (decarboxylating).